The following is a 176-amino-acid chain: Large ribosomal subunit protein eL20A (176 aa).

It belongs to the eukaryotic ribosomal protein eL20 family. In terms of assembly, component of the large ribosomal subunit (LSU). Mature yeast ribosomes consist of a small (40S) and a large (60S) subunit. The 40S small subunit contains 1 molecule of ribosomal RNA (18S rRNA) and at least 33 different proteins. The large 60S subunit contains 3 rRNA molecules (25S, 5.8S and 5S rRNA) and at least 46 different proteins. eL20 forms multiple interactions with RNA and proteins in the central protuberance, connecting components of core functional centers that are located far apart.

It localises to the cytoplasm. In terms of biological role, component of the ribosome, a large ribonucleoprotein complex responsible for the synthesis of proteins in the cell. The small ribosomal subunit (SSU) binds messenger RNAs (mRNAs) and translates the encoded message by selecting cognate aminoacyl-transfer RNA (tRNA) molecules. The large subunit (LSU) contains the ribosomal catalytic site termed the peptidyl transferase center (PTC), which catalyzes the formation of peptide bonds, thereby polymerizing the amino acids delivered by tRNAs into a polypeptide chain. The nascent polypeptides leave the ribosome through a tunnel in the LSU and interact with protein factors that function in enzymatic processing, targeting, and the membrane insertion of nascent chains at the exit of the ribosomal tunnel. The polypeptide is Large ribosomal subunit protein eL20A (rpl2001) (Schizosaccharomyces pombe (strain 972 / ATCC 24843) (Fission yeast)).